Consider the following 473-residue polypeptide: Bifunctional protein HldE (473 aa).

The segment at 1 to 318 (MKLSMPRFDQ…RAIQREEGSE (318 aa)) is ribokinase. An ATP-binding site is contributed by 194 to 197 (NLSE). Asp-263 is a catalytic residue. Positions 343–473 (FTNGCFDILH…TAIVEKIRKH (131 aa)) are cytidylyltransferase.

It in the N-terminal section; belongs to the carbohydrate kinase PfkB family. This sequence in the C-terminal section; belongs to the cytidylyltransferase family. As to quaternary structure, homodimer.

It carries out the reaction D-glycero-beta-D-manno-heptose 7-phosphate + ATP = D-glycero-beta-D-manno-heptose 1,7-bisphosphate + ADP + H(+). The enzyme catalyses D-glycero-beta-D-manno-heptose 1-phosphate + ATP + H(+) = ADP-D-glycero-beta-D-manno-heptose + diphosphate. The protein operates within nucleotide-sugar biosynthesis; ADP-L-glycero-beta-D-manno-heptose biosynthesis; ADP-L-glycero-beta-D-manno-heptose from D-glycero-beta-D-manno-heptose 7-phosphate: step 1/4. It participates in nucleotide-sugar biosynthesis; ADP-L-glycero-beta-D-manno-heptose biosynthesis; ADP-L-glycero-beta-D-manno-heptose from D-glycero-beta-D-manno-heptose 7-phosphate: step 3/4. Functionally, catalyzes the phosphorylation of D-glycero-D-manno-heptose 7-phosphate at the C-1 position to selectively form D-glycero-beta-D-manno-heptose-1,7-bisphosphate. Catalyzes the ADP transfer from ATP to D-glycero-beta-D-manno-heptose 1-phosphate, yielding ADP-D-glycero-beta-D-manno-heptose. In Pseudomonas entomophila (strain L48), this protein is Bifunctional protein HldE.